A 247-amino-acid chain; its full sequence is NifU-like scaffold protein (247 aa).

It belongs to the NifU family. Homodimer.

It localises to the plastid. It is found in the apicoplast. The protein operates within cofactor biosynthesis; iron-sulfur cluster biosynthesis. Functionally, binds and transfers [4Fe-4S] iron-sulfur clusters to target proteins. This Plasmodium falciparum (isolate 3D7) protein is NifU-like scaffold protein.